Here is a 355-residue protein sequence, read N- to C-terminus: Mu-like prophage FluMu I protein (355 aa).

It belongs to the peptidase U35 family.

Potential protease involved in virion morphogenesis. The chain is Mu-like prophage FluMu I protein from Haemophilus influenzae (strain ATCC 51907 / DSM 11121 / KW20 / Rd).